A 421-amino-acid polypeptide reads, in one-letter code: Threonine--tRNA ligase editing subunit (421 aa).

The protein belongs to the class-II aminoacyl-tRNA synthetase family. Archaea-specific ThrRS editing domain subfamily. In terms of assembly, probably interacts with its catalytic subunit.

The protein localises to the cytoplasm. Functionally, freestanding tRNA editing subunit of threonine--tRNA ligase, the catalytic subunit is probably AC Q9YDW0. Deacylates (edits) mischarged L-seryl-tRNA(Thr) in trans; has no activity on correctly charged L-threonyl-tRNA(Thr). Probably does not aminoacylate tRNA(Thr). Deacylates correctly charged glycyl-tRNA(Gly), but not glycyl-tRNA(Gly)(2'-dA76) (the terminal 2'-OH of tRNA adenine 76 has been dehydroxylated) nor the 2'-fluoro tRNA derivative, strongly suggesting the editing function is catalyzed by the 2'-OH of A76 of tRNA(Thr). The protein is Threonine--tRNA ligase editing subunit (thrS2) of Aeropyrum pernix (strain ATCC 700893 / DSM 11879 / JCM 9820 / NBRC 100138 / K1).